A 380-amino-acid chain; its full sequence is tRNA-specific 2-thiouridylase MnmA (380 aa).

ATP is bound by residues 9-16 (GVSGGVDS) and Met-35. Residues 94 to 96 (NPD) form an interaction with target base in tRNA region. Cys-99 serves as the catalytic Nucleophile. Cys-99 and Cys-195 are disulfide-bonded. Gly-123 is a binding site for ATP. Positions 145 to 147 (KDQ) are interaction with tRNA. Catalysis depends on Cys-195, which acts as the Cysteine persulfide intermediate. The interaction with tRNA stretch occupies residues 308-309 (RY).

It belongs to the MnmA/TRMU family.

The protein localises to the cytoplasm. It catalyses the reaction S-sulfanyl-L-cysteinyl-[protein] + uridine(34) in tRNA + AH2 + ATP = 2-thiouridine(34) in tRNA + L-cysteinyl-[protein] + A + AMP + diphosphate + H(+). Functionally, catalyzes the 2-thiolation of uridine at the wobble position (U34) of tRNA, leading to the formation of s(2)U34. The chain is tRNA-specific 2-thiouridylase MnmA from Stenotrophomonas maltophilia (strain R551-3).